A 1024-amino-acid chain; its full sequence is Multidrug resistance protein MdtC (1024 aa).

11 helical membrane passes run 15–35 (WLLT…LPVA), 333–353 (EVEQ…FAFL), 360–380 (LIPA…MYLC), 387–407 (LSLM…IVVL), 431–451 (VGFT…PLLL), 463–483 (FAIT…TLTP), 528–548 (WGLL…ISIP), 853–873 (LWLI…LYES), 897–917 (LFNA…IGIV), 953–973 (PIIM…LGSG), and 984–1004 (ITIV…TPVV).

This sequence belongs to the resistance-nodulation-cell division (RND) (TC 2.A.6) family. MdtC subfamily. As to quaternary structure, part of a tripartite efflux system composed of MdtA, MdtB and MdtC. MdtC forms a heteromultimer with MdtB.

It is found in the cell inner membrane. The chain is Multidrug resistance protein MdtC from Erwinia tasmaniensis (strain DSM 17950 / CFBP 7177 / CIP 109463 / NCPPB 4357 / Et1/99).